The following is a 278-amino-acid chain: Sulfur carrier protein FdhD (278 aa).

Catalysis depends on Cys-121, which acts as the Cysteine persulfide intermediate. Residue 260–265 (FCKPGR) coordinates Mo-bis(molybdopterin guanine dinucleotide).

This sequence belongs to the FdhD family.

It is found in the cytoplasm. Functionally, required for formate dehydrogenase (FDH) activity. Acts as a sulfur carrier protein that transfers sulfur from IscS to the molybdenum cofactor prior to its insertion into FDH. The polypeptide is Sulfur carrier protein FdhD (Salmonella newport (strain SL254)).